The sequence spans 81 residues: Exodeoxyribonuclease 7 small subunit (81 aa).

This sequence belongs to the XseB family. In terms of assembly, heterooligomer composed of large and small subunits.

It is found in the cytoplasm. The enzyme catalyses Exonucleolytic cleavage in either 5'- to 3'- or 3'- to 5'-direction to yield nucleoside 5'-phosphates.. Its function is as follows. Bidirectionally degrades single-stranded DNA into large acid-insoluble oligonucleotides, which are then degraded further into small acid-soluble oligonucleotides. This chain is Exodeoxyribonuclease 7 small subunit, found in Nitratidesulfovibrio vulgaris (strain ATCC 29579 / DSM 644 / CCUG 34227 / NCIMB 8303 / VKM B-1760 / Hildenborough) (Desulfovibrio vulgaris).